The following is a 229-amino-acid chain: UPF0319 protein Sbal223_2728 (229 aa).

The N-terminal stretch at 1–21 (MKSLLPISSLLVLLGSASAFA) is a signal peptide.

The protein belongs to the UPF0319 family.

The chain is UPF0319 protein Sbal223_2728 from Shewanella baltica (strain OS223).